Here is a 317-residue protein sequence, read N- to C-terminus: Dehydrogenase/reductase SDR family member 12 (317 aa).

2 residues coordinate NAD(+): Ser-50 and Ile-52. Ser-175 contributes to the substrate binding site. Residues Tyr-201, Lys-205, and Thr-234 each coordinate NAD(+). Catalysis depends on Tyr-201, which acts as the Proton acceptor.

The protein belongs to the short-chain dehydrogenases/reductases (SDR) family.

In terms of biological role, putative oxidoreductase. The sequence is that of Dehydrogenase/reductase SDR family member 12 (DHRS12) from Bos taurus (Bovine).